Reading from the N-terminus, the 650-residue chain is Probable LIM domain-containing serine/threonine-protein kinase DDB_G0287001 (650 aa).

2 consecutive LIM zinc-binding domains span residues 4-63 and 64-122; these read NNCG…KLNA and RKCF…PSDK. 3 disordered regions span residues 118–138, 171–197, and 293–320; these read KPSD…LPGK, LSSS…SSFM, and LLNS…NLNT. A compositionally biased stretch (gly residues) spans 173–188; the sequence is SSGGSGNSISGSGGTN. Positions 386–643 constitute a Protein kinase domain; it reads VAFGDVIASG…DTLKKISESL (258 aa). ATP contacts are provided by residues 392 to 400 and K413; that span reads IASGASGKV. D509 functions as the Proton acceptor in the catalytic mechanism.

This sequence belongs to the protein kinase superfamily. TKL Ser/Thr protein kinase family.

The enzyme catalyses L-seryl-[protein] + ATP = O-phospho-L-seryl-[protein] + ADP + H(+). It catalyses the reaction L-threonyl-[protein] + ATP = O-phospho-L-threonyl-[protein] + ADP + H(+). The polypeptide is Probable LIM domain-containing serine/threonine-protein kinase DDB_G0287001 (Dictyostelium discoideum (Social amoeba)).